A 298-amino-acid chain; its full sequence is Iron/alpha-ketoglutarate-dependent dioxygenase ausO (298 aa).

3 residues coordinate Fe cation: H130, D132, and H211.

The protein belongs to the PhyH family. Homodimer. Fe cation serves as cofactor.

The protein operates within secondary metabolite biosynthesis; terpenoid biosynthesis. Functionally, iron/alpha-ketoglutarate-dependent dioxygenase; part of the gene cluster that mediates the biosynthesis of calidodehydroaustin, a fungal meroterpenoid. The first step of the pathway is the synthesis of 3,5-dimethylorsellinic acid by the polyketide synthase ausA. 3,5-dimethylorsellinic acid is then prenylated by the polyprenyl transferase ausN. Further epoxidation by the FAD-dependent monooxygenase ausM and cyclization by the probable terpene cyclase ausL lead to the formation of protoaustinoid A. Protoaustinoid A is then oxidized to spiro-lactone preaustinoid A3 by the combined action of the FAD-binding monooxygenases ausB and ausC, and the dioxygenase ausE. Acid-catalyzed keto-rearrangement and ring contraction of the tetraketide portion of preaustinoid A3 by ausJ lead to the formation of preaustinoid A4. The aldo-keto reductase ausK, with the help of ausH, is involved in the next step by transforming preaustinoid A4 into isoaustinone which is in turn hydroxylated by the P450 monooxygenase ausI to form austinolide. The cytochrome P450 monooxygenase ausG modifies austinolide to austinol. Austinol is further acetylated to austin by the O-acetyltransferase ausP, which spontaneously changes to dehydroaustin. The cytochrome P450 monooxygenase ausR then converts dehydroaustin is into 7-dehydrodehydroaustin. The hydroxylation catalyzed by ausR permits the O-acetyltransferase ausQ to add an additional acetyl group to the molecule, leading to the formation of acetoxydehydroaustin. The short chain dehydrogenase ausT catalyzes the reduction of the double bond present between carbon atoms 1 and 2 to convert 7-dehydrodehydroaustin into 1,2-dihydro-7-hydroxydehydroaustin. AusQ catalyzes not only an acetylation reaction but also the addition of the PKS ausV diketide product to 1,2-dihydro-7-hydroxydehydroaustin, forming precalidodehydroaustin. Finally, the iron/alpha-ketoglutarate-dependent dioxygenase converts precalidodehydroaustin into calidodehydroaustin. This Aspergillus calidoustus protein is Iron/alpha-ketoglutarate-dependent dioxygenase ausO.